The primary structure comprises 174 residues: Mediator of RNA polymerase II transcription subunit 30 (174 aa).

A coiled-coil region spans residues 113 to 166; sequence VEDDSSKLEDRMANQLRAASEERREVLEVNKKLKQKNQQLKMIMDQLRNLIWEI.

This sequence belongs to the Mediator complex subunit 30 family. As to quaternary structure, component of the Mediator complex.

It is found in the nucleus. Its function is as follows. Component of the Mediator complex, a coactivator involved in the regulated transcription of nearly all RNA polymerase II-dependent genes. Mediator functions as a bridge to convey information from gene-specific regulatory proteins to the basal RNA polymerase II transcription machinery. Mediator is recruited to promoters by direct interactions with regulatory proteins and serves as a scaffold for the assembly of a functional preinitiation complex with RNA polymerase II and the general transcription factors. The protein is Mediator of RNA polymerase II transcription subunit 30 (med30) of Danio rerio (Zebrafish).